The following is a 169-amino-acid chain: Small ribosomal subunit protein uS9 (169 aa).

Disordered regions lie at residues 1-29 (MVEPTGIEDVQEYDENSEEYPAEYTTETP) and 128-169 (MDPE…YSKR). Acidic residues predominate over residues 9-21 (DVQEYDENSEEYP). A compositionally biased stretch (basic residues) spans 150-169 (VERKKAGLKKARKAPQYSKR).

This sequence belongs to the universal ribosomal protein uS9 family.

In Thermobifida fusca (strain YX), this protein is Small ribosomal subunit protein uS9.